The following is a 157-amino-acid chain: ATP synthase subunit b (157 aa).

Residues 7 to 27 (LIAQLVVFFILAWVTMKFVWP) traverse the membrane as a helical segment.

This sequence belongs to the ATPase B chain family. As to quaternary structure, F-type ATPases have 2 components, F(1) - the catalytic core - and F(0) - the membrane proton channel. F(1) has five subunits: alpha(3), beta(3), gamma(1), delta(1), epsilon(1). F(0) has three main subunits: a(1), b(2) and c(10-14). The alpha and beta chains form an alternating ring which encloses part of the gamma chain. F(1) is attached to F(0) by a central stalk formed by the gamma and epsilon chains, while a peripheral stalk is formed by the delta and b chains.

The protein localises to the cell inner membrane. In terms of biological role, f(1)F(0) ATP synthase produces ATP from ADP in the presence of a proton or sodium gradient. F-type ATPases consist of two structural domains, F(1) containing the extramembraneous catalytic core and F(0) containing the membrane proton channel, linked together by a central stalk and a peripheral stalk. During catalysis, ATP synthesis in the catalytic domain of F(1) is coupled via a rotary mechanism of the central stalk subunits to proton translocation. Its function is as follows. Component of the F(0) channel, it forms part of the peripheral stalk, linking F(1) to F(0). This is ATP synthase subunit b from Aromatoleum aromaticum (strain DSM 19018 / LMG 30748 / EbN1) (Azoarcus sp. (strain EbN1)).